A 69-amino-acid chain; its full sequence is Cytochrome c oxidase subunit 8A, mitochondrial (69 aa).

The transit peptide at 1 to 25 (MSVLTSLLLRGLTGSARWLPVPRAK) directs the protein to the mitochondrion. The SIFI-degron motif lies at 2–19 (SVLTSLLLRGLTGSARWL). Over 26–36 (VHSMPPEVELG) the chain is Mitochondrial matrix. A helical transmembrane segment spans residues 37 to 60 (IMEKAIGLTSCFVSLFLPAGWILS). The Mitochondrial intermembrane segment spans residues 61 to 69 (HLEDYKRPE).

It belongs to the cytochrome c oxidase VIII family. As to quaternary structure, component of the cytochrome c oxidase (complex IV, CIV), a multisubunit enzyme composed of 14 subunits. The complex is composed of a catalytic core of 3 subunits MT-CO1, MT-CO2 and MT-CO3, encoded in the mitochondrial DNA, and 11 supernumerary subunits COX4I, COX5A, COX5B, COX6A, COX6B, COX6C, COX7A, COX7B, COX7C, COX8 and NDUFA4, which are encoded in the nuclear genome. The complex exists as a monomer or a dimer and forms supercomplexes (SCs) in the inner mitochondrial membrane with NADH-ubiquinone oxidoreductase (complex I, CI) and ubiquinol-cytochrome c oxidoreductase (cytochrome b-c1 complex, complex III, CIII), resulting in different assemblies (supercomplex SCI(1)III(2)IV(1) and megacomplex MCI(2)III(2)IV(2)). Post-translationally, in response to mitochondrial stress, the precursor protein is ubiquitinated by the SIFI complex in the cytoplasm before mitochondrial import, leading to its degradation. Within the SIFI complex, UBR4 initiates ubiquitin chain that are further elongated or branched by KCMF1.

The protein localises to the mitochondrion inner membrane. The protein operates within energy metabolism; oxidative phosphorylation. Component of the cytochrome c oxidase, the last enzyme in the mitochondrial electron transport chain which drives oxidative phosphorylation. The respiratory chain contains 3 multisubunit complexes succinate dehydrogenase (complex II, CII), ubiquinol-cytochrome c oxidoreductase (cytochrome b-c1 complex, complex III, CIII) and cytochrome c oxidase (complex IV, CIV), that cooperate to transfer electrons derived from NADH and succinate to molecular oxygen, creating an electrochemical gradient over the inner membrane that drives transmembrane transport and the ATP synthase. Cytochrome c oxidase is the component of the respiratory chain that catalyzes the reduction of oxygen to water. Electrons originating from reduced cytochrome c in the intermembrane space (IMS) are transferred via the dinuclear copper A center (CU(A)) of subunit 2 and heme A of subunit 1 to the active site in subunit 1, a binuclear center (BNC) formed by heme A3 and copper B (CU(B)). The BNC reduces molecular oxygen to 2 water molecules using 4 electrons from cytochrome c in the IMS and 4 protons from the mitochondrial matrix. The chain is Cytochrome c oxidase subunit 8A, mitochondrial (COX8A) from Macaca silenus (Lion-tailed macaque).